The primary structure comprises 1223 residues: Kinesin-like protein costa (1223 aa).

Positions 4–394 (PIQVAVRICP…LQFAFKVQCV (391 aa)) constitute a Kinesin motor domain. Residues 13–90 (PYTEPSENRK…LPTDSNGNEN (78 aa)) form a disordered region. Over residues 39–62 (AKAESFSDSEDNKNDASNRQRPEE) the composition is skewed to basic and acidic residues. Residue 178 to 185 (GQRGQGKT) participates in ATP binding. 3 disordered regions span residues 494–528 (RSQK…ESQR), 560–604 (KHPK…SIQP), and 625–646 (TAQP…ESSA). The segment covering 569–593 (QERDKESKLDAPPEKDKEKIEERKT) has biased composition (basic and acidic residues). Coiled coils occupy residues 658–743 (AAAN…QGRE), 773–825 (ESGQ…GASG), and 982–1015 (NKVI…ERVL). Positions 774-799 (SGQKLKKLQQSMAESRKQQEELEKKI) are disordered. Residues 787 to 799 (ESRKQQEELEKKI) are compositionally biased toward basic and acidic residues. A compositionally biased stretch (low complexity) spans 1162–1178 (TTTATATTTTTTTTTTT). The tract at residues 1162-1188 (TTTATATTTTTTTTTTTGGKGKERGLP) is disordered.

It belongs to the TRAFAC class myosin-kinesin ATPase superfamily. Kinesin family. KIF27 subfamily. Homodimer (Potential). Binds microtubules. Interacts with ci, smo, sgg, CkIalpha and protein kinase A catalytic subunit.

The protein resides in the cytoplasm. It localises to the cytoskeleton. Functionally, regulates cubitus interruptus (ci) processing by recruiting multiple kinases to promote its efficient phosphorylation. Scaffolds multiple kinases and ci into proximity to promote its hyperphosphorylation, which then targets it for SCFSlimb/proteasome-mediated processing to generate its repressor form. Hh signaling inhibits ci phosphorylation by interfering with the cos-ci-kinases complex formation. The polypeptide is Kinesin-like protein costa (cos) (Drosophila pseudoobscura pseudoobscura (Fruit fly)).